Reading from the N-terminus, the 119-residue chain is Large ribosomal subunit protein uL18 (119 aa).

It belongs to the universal ribosomal protein uL18 family. As to quaternary structure, part of the 50S ribosomal subunit; part of the 5S rRNA/L5/L18/L25 subcomplex. Contacts the 5S and 23S rRNAs.

Functionally, this is one of the proteins that bind and probably mediate the attachment of the 5S RNA into the large ribosomal subunit, where it forms part of the central protuberance. This Dinoroseobacter shibae (strain DSM 16493 / NCIMB 14021 / DFL 12) protein is Large ribosomal subunit protein uL18.